A 943-amino-acid polypeptide reads, in one-letter code: Isoleucine--tRNA ligase (943 aa).

The 'HIGH' region motif lies at 59-69 (PYANGQIHLGH). Position 577 (glutamate 577) interacts with L-isoleucyl-5'-AMP. The 'KMSKS' region signature appears at 618–622 (KMSKS). Lysine 621 lines the ATP pocket. Zn(2+) is bound by residues cysteine 906, cysteine 909, cysteine 926, and cysteine 929.

It belongs to the class-I aminoacyl-tRNA synthetase family. IleS type 1 subfamily. As to quaternary structure, monomer. Zn(2+) is required as a cofactor.

It is found in the cytoplasm. The enzyme catalyses tRNA(Ile) + L-isoleucine + ATP = L-isoleucyl-tRNA(Ile) + AMP + diphosphate. In terms of biological role, catalyzes the attachment of isoleucine to tRNA(Ile). As IleRS can inadvertently accommodate and process structurally similar amino acids such as valine, to avoid such errors it has two additional distinct tRNA(Ile)-dependent editing activities. One activity is designated as 'pretransfer' editing and involves the hydrolysis of activated Val-AMP. The other activity is designated 'posttransfer' editing and involves deacylation of mischarged Val-tRNA(Ile). The polypeptide is Isoleucine--tRNA ligase (Xylella fastidiosa (strain M12)).